A 361-amino-acid polypeptide reads, in one-letter code: Deoxyhypusine hydroxylase (361 aa).

HEAT-like PBS-type repeat units follow at residues 59 to 85 (LKHE…VLEN), 94 to 120 (VRHE…YMQD), 183 to 211 (QRYR…GFRD), and 216 to 242 (FRHE…RLRD). Positions 61, 62, 96, and 97 each coordinate Fe cation. 4 residues coordinate Fe cation: histidine 218, glutamate 219, histidine 251, and glutamate 252.

Belongs to the deoxyhypusine hydroxylase family. Fe(2+) is required as a cofactor.

Its subcellular location is the cytoplasm. The protein resides in the nucleus. The enzyme catalyses [eIF5A protein]-deoxyhypusine + AH2 + O2 = [eIF5A protein]-hypusine + A + H2O. It participates in protein modification; eIF5A hypusination. In terms of biological role, catalyzes the hydroxylation of the N(6)-(4-aminobutyl)-L-lysine intermediate to form hypusine, an essential post-translational modification only found in mature eIF-5A factor. This is Deoxyhypusine hydroxylase from Cryptococcus neoformans var. neoformans serotype D (strain B-3501A) (Filobasidiella neoformans).